We begin with the raw amino-acid sequence, 130 residues long: Small ribosomal subunit protein uS9 (130 aa).

Belongs to the universal ribosomal protein uS9 family.

This chain is Small ribosomal subunit protein uS9, found in Herminiimonas arsenicoxydans.